The following is an 83-amino-acid chain: Small ribosomal subunit protein bS18 (83 aa).

The protein belongs to the bacterial ribosomal protein bS18 family. Part of the 30S ribosomal subunit. Forms a tight heterodimer with protein bS6.

Functionally, binds as a heterodimer with protein bS6 to the central domain of the 16S rRNA, where it helps stabilize the platform of the 30S subunit. The polypeptide is Small ribosomal subunit protein bS18 (Tropheryma whipplei (strain TW08/27) (Whipple's bacillus)).